A 585-amino-acid polypeptide reads, in one-letter code: A-type ATP synthase subunit A (585 aa).

231–238 (GPFGSGKT) lines the ATP pocket.

The protein belongs to the ATPase alpha/beta chains family. Has multiple subunits with at least A(3), B(3), C, D, E, F, H, I and proteolipid K(x).

It localises to the cell membrane. The enzyme catalyses ATP + H2O + 4 H(+)(in) = ADP + phosphate + 5 H(+)(out). In terms of biological role, produces ATP from ADP in the presence of a proton gradient across the membrane. The archaeal alpha chain is a catalytic subunit. Component of the A-type ATP synthase that produces ATP from ADP in the presence of a proton gradient across the membrane. The A chain is the catalytic subunit. This Thermococcus kodakarensis (strain ATCC BAA-918 / JCM 12380 / KOD1) (Pyrococcus kodakaraensis (strain KOD1)) protein is A-type ATP synthase subunit A.